Here is a 346-residue protein sequence, read N- to C-terminus: MNINDFDFDLPEELIAQTPLEKRSESRLLILDPKTEELEDRHFYDIIDELEAGDALVLNNTRVLPARLHGERAETGGHIELLLLKDMGENRWETLAKPARKMKVGEEVVFGDGRLKAVVVEILEHGGRIVEFKYDGIFLEILESLGEMPLPPYIHEQLEDQERYQTVFAKENGSAAAPTAGLHYTPELLEKIADKGVKIVELTLHVGLGTFRPVSVDNVDEHHMHSEFYRLTEEAAAQLRAVKASGHKIFASGTTSIRTLETIGSKFDGDIQADSGWTDIFIKPGYEWKVVDAFNTNFHLPKSTLVMLVAAFAGRDFVLEAYQHAIDEKYRFFSFGDAMFVRSKNK.

The protein belongs to the QueA family. As to quaternary structure, monomer.

It is found in the cytoplasm. The catalysed reaction is 7-aminomethyl-7-carbaguanosine(34) in tRNA + S-adenosyl-L-methionine = epoxyqueuosine(34) in tRNA + adenine + L-methionine + 2 H(+). Its pathway is tRNA modification; tRNA-queuosine biosynthesis. Functionally, transfers and isomerizes the ribose moiety from AdoMet to the 7-aminomethyl group of 7-deazaguanine (preQ1-tRNA) to give epoxyqueuosine (oQ-tRNA). This is S-adenosylmethionine:tRNA ribosyltransferase-isomerase from Lactococcus lactis subsp. cremoris (strain MG1363).